Consider the following 250-residue polypeptide: Probable 2' cyclic ADP-D-ribose synthase TcpB (250 aa).

The tract at residues 1 to 46 (MSKEKQAQSKAHKAQQAISSAKSLSTQKSKMSELERATRDGAAIGK) is disordered. Positions 14 to 23 (AQQAISSAKS) are enriched in low complexity. The span at 30 to 39 (KMSELERATR) shows a compositional bias: basic and acidic residues. The region spanning 117-250 (EEYDFFISHA…EIAKELHSLI (134 aa)) is the TIR domain. Glutamate 192 is a catalytic residue.

Homodimer. Interacts with host TIRAP. Interacts with host TLR4, abolishes the interaction of host TIRAP with TLR4.

Its subcellular location is the secreted. The protein resides in the host cell membrane. It carries out the reaction NAD(+) + H2O = ADP-D-ribose + nicotinamide + H(+). The catalysed reaction is NAD(+) = 2'cADPR + nicotinamide + H(+). Functionally, virulence factor that interferes with host Toll-like receptor 2 (TLR2) signaling, resulting in the reduction of dendritic cell maturation, inhibition of pro-inflammatory cytokine secretion and impaired NF-kappa-B activation in macrophages. Also acts on host TLR4. Binds host lipids. Has NAD(+) hydrolase (NADase) activity, catalyzes cleavage of NAD(+) into ADP-D-ribose (ADPR) and nicotinamide, also generates a cyclization variant of cyclic ADPR (cADPR), termed v-cADPR (probably 2'cADPR). This chain is Probable 2' cyclic ADP-D-ribose synthase TcpB, found in Brucella abortus (strain 2308).